Reading from the N-terminus, the 1051-residue chain is Inactive tyrosine-protein kinase 7 (1051 aa).

An N-terminal signal peptide occupies residues 1–22 (MAALRALLLLLAVGAQAAIRFA). Ig-like C2-type domains follow at residues 23–105 (KEPY…ANAS), 115–204 (SVVL…DNFT), 213–298 (PQAV…KATL), 308–388 (PFSP…LSIT), 393–472 (PKWV…GSIE), 487–566 (PPPQ…ATVQ), and 573–661 (VTFK…AFLY). Residues 23–685 (KEPYSQDALH…SHTPYKMIQT (663 aa)) lie on the Extracellular side of the membrane. C40 and C88 are disulfide-bonded. An N-linked (GlcNAc...) asparagine glycan is attached at N103. The cysteines at positions 137 and 187 are disulfide-linked. N-linked (GlcNAc...) asparagine glycosylation is found at N202, N255, and N264. Disulfide bonds link C234/C282, C326/C372, C414/C462, C505/C551, and C594/C645. N-linked (GlcNAc...) asparagine glycans are attached at residues N444, N548, and N627. Residues 686–706 (IGLSVGAAVAYIIIVLGLMFY) traverse the membrane as a helical segment. Residues 707-1051 (CKKRRKAKRL…LGDSPADSKA (345 aa)) lie on the Cytoplasmic side of the membrane. Residues 777–1048 (LQTITTLGRG…AAALGDSPAD (272 aa)) enclose the Protein kinase; inactive domain.

This sequence belongs to the protein kinase superfamily. Tyr protein kinase family. Insulin receptor subfamily. As to expression, expressed in bone marrow, spleen, bursa, thymus and brain. Weakly expressed in fibroblasts. Also expressed in embryonic liver.

It localises to the membrane. In terms of biological role, inactive tyrosine kinase involved in Wnt signaling. pathway. This is Inactive tyrosine-protein kinase 7 (PTK7) from Gallus gallus (Chicken).